Consider the following 227-residue polypeptide: ATP synthase F(0) complex subunit a (227 aa).

6 consecutive transmembrane segments (helical) span residues 14 to 34, 69 to 89, 98 to 118, 139 to 159, 167 to 187, and 190 to 210; these read LLGHPLILLSLLLPALLFPSP, WALMLTSLMTMLLTINLLGLL, QLSMNMALAFPLWLATLLTGL, IPALILIETTSLLIRPLALGV, AGHLLIQLISTASIALKPILP, and SILTMAILLLLTILEVAVAMI.

This sequence belongs to the ATPase A chain family. In terms of assembly, component of the ATP synthase complex composed at least of ATP5F1A/subunit alpha, ATP5F1B/subunit beta, ATP5MC1/subunit c (homooctomer), MT-ATP6/subunit a, MT-ATP8/subunit 8, ATP5ME/subunit e, ATP5MF/subunit f, ATP5MG/subunit g, ATP5MK/subunit k, ATP5MJ/subunit j, ATP5F1C/subunit gamma, ATP5F1D/subunit delta, ATP5F1E/subunit epsilon, ATP5PF/subunit F6, ATP5PB/subunit b, ATP5PD/subunit d, ATP5PO/subunit OSCP. ATP synthase complex consists of a soluble F(1) head domain (subunits alpha(3) and beta(3)) - the catalytic core - and a membrane F(0) domain - the membrane proton channel (subunits c, a, 8, e, f, g, k and j). These two domains are linked by a central stalk (subunits gamma, delta, and epsilon) rotating inside the F1 region and a stationary peripheral stalk (subunits F6, b, d, and OSCP). Interacts with DNAJC30; interaction is direct.

The protein resides in the mitochondrion inner membrane. It catalyses the reaction H(+)(in) = H(+)(out). Subunit a, of the mitochondrial membrane ATP synthase complex (F(1)F(0) ATP synthase or Complex V) that produces ATP from ADP in the presence of a proton gradient across the membrane which is generated by electron transport complexes of the respiratory chain. ATP synthase complex consist of a soluble F(1) head domain - the catalytic core - and a membrane F(1) domain - the membrane proton channel. These two domains are linked by a central stalk rotating inside the F(1) region and a stationary peripheral stalk. During catalysis, ATP synthesis in the catalytic domain of F(1) is coupled via a rotary mechanism of the central stalk subunits to proton translocation. With the subunit c (ATP5MC1), forms the proton-conducting channel in the F(0) domain, that contains two crucial half-channels (inlet and outlet) that facilitate proton movement from the mitochondrial intermembrane space (IMS) into the matrix. Protons are taken up via the inlet half-channel and released through the outlet half-channel, following a Grotthuss mechanism. In Anas platyrhynchos (Mallard), this protein is ATP synthase F(0) complex subunit a.